A 353-amino-acid polypeptide reads, in one-letter code: Bone morphogenetic protein 2 (353 aa).

The propeptide occupies 1–239 (GSLKRPEDLL…GHPLHKREKR (239 aa)). N-linked (GlcNAc...) asparagine glycans are attached at residues Asn-91, Asn-121, and Asn-157. Residues 228–248 (GKGHPLHKREKRQAKHKQRKR) are disordered. Residues 231–248 (HPLHKREKRQAKHKQRKR) show a composition bias toward basic residues. Disulfide bonds link Cys-253-Cys-318, Cys-282-Cys-350, and Cys-286-Cys-352. Asn-295 carries N-linked (GlcNAc...) asparagine glycosylation.

The protein belongs to the TGF-beta family. Homodimer; disulfide-linked.

It is found in the secreted. Negatively regulates the structure and function of the limb apical ectodermal ridge. This is Bone morphogenetic protein 2 (BMP2) from Gallus gallus (Chicken).